The sequence spans 370 residues: DNA repair protein RAD51 homolog 2 (370 aa).

An ATP-binding site is contributed by 109–116 (GPPGIGKS).

It belongs to the RecA family. RAD51 subfamily. Preferentially expressed in flower buds and roots.

The protein localises to the nucleus. May be involved in the homologous recombination repair (HRR) pathway of double-stranded DNA breaks arising during DNA replication or induced by DNA-damaging agents. The protein is DNA repair protein RAD51 homolog 2 (RAD51B) of Arabidopsis thaliana (Mouse-ear cress).